A 534-amino-acid polypeptide reads, in one-letter code: CTP synthase (534 aa).

The amidoligase domain stretch occupies residues 1–267 (MSKYIVVTGG…GSYILNRLNI (267 aa)). S13 contacts CTP. Position 13 (S13) interacts with UTP. 14–19 (SIGKGI) contacts ATP. An L-glutamine-binding site is contributed by Y54. Position 71 (D71) interacts with ATP. Residues D71 and E141 each coordinate Mg(2+). Residues 148 to 150 (DIE), 188 to 193 (KTKPTQ), and K224 each bind CTP. UTP-binding positions include 188–193 (KTKPTQ) and K224. One can recognise a Glutamine amidotransferase type-1 domain in the interval 294–532 (KIAVVGKYIE…IKAAKNKKQN (239 aa)). G353 lines the L-glutamine pocket. The active-site Nucleophile; for glutamine hydrolysis is C380. L-glutamine contacts are provided by residues 381–384 (LGLH), E403, and R460. Catalysis depends on residues H505 and E507.

This sequence belongs to the CTP synthase family. In terms of assembly, homotetramer.

The catalysed reaction is UTP + L-glutamine + ATP + H2O = CTP + L-glutamate + ADP + phosphate + 2 H(+). It carries out the reaction L-glutamine + H2O = L-glutamate + NH4(+). The enzyme catalyses UTP + NH4(+) + ATP = CTP + ADP + phosphate + 2 H(+). The protein operates within pyrimidine metabolism; CTP biosynthesis via de novo pathway; CTP from UDP: step 2/2. Allosterically activated by GTP, when glutamine is the substrate; GTP has no effect on the reaction when ammonia is the substrate. The allosteric effector GTP functions by stabilizing the protein conformation that binds the tetrahedral intermediate(s) formed during glutamine hydrolysis. Inhibited by the product CTP, via allosteric rather than competitive inhibition. Functionally, catalyzes the ATP-dependent amination of UTP to CTP with either L-glutamine or ammonia as the source of nitrogen. Regulates intracellular CTP levels through interactions with the four ribonucleotide triphosphates. The protein is CTP synthase of Methanosphaera stadtmanae (strain ATCC 43021 / DSM 3091 / JCM 11832 / MCB-3).